Consider the following 755-residue polypeptide: Periplasmic nitrate reductase (755 aa).

Positions 1-32 (MSTSRRDFLKYFAMSAAVAAASGAGFGSLALA) form a signal peptide, tat-type signal. In terms of domain architecture, 4Fe-4S Mo/W bis-MGD-type spans 38 to 93 (EKWVKGVCRYCGTGCGVLVGVKDGKAVAIQGDPNNHNAGLLCLKGSLLIPVLNSKE). [4Fe-4S] cluster contacts are provided by cysteine 45, cysteine 48, cysteine 52, and cysteine 79. Mo-bis(molybdopterin guanine dinucleotide)-binding positions include lysine 81, glutamine 143, asparagine 168, cysteine 172, 208-212 (NTSEA), 236-238 (DPR), 255-257 (GTD), methionine 340, glutamine 344, asparagine 450, 475-477 (IEA), and 647-656 (SMRVIDHWHT). Residues 648–653 (MRVIDH) and phenylalanine 721 each bind substrate. Mo-bis(molybdopterin guanine dinucleotide)-binding residues include asparagine 729 and lysine 746.

This sequence belongs to the prokaryotic molybdopterin-containing oxidoreductase family. NasA/NapA/NarB subfamily. In terms of assembly, monomer. Component of the periplasmic nitrate reductase NapAB complex composed of NapA and NapB. The cofactor is [4Fe-4S] cluster. Mo-bis(molybdopterin guanine dinucleotide) is required as a cofactor. Predicted to be exported by the Tat system. The position of the signal peptide cleavage has been experimentally proven.

It localises to the periplasm. It carries out the reaction 2 Fe(II)-[cytochrome] + nitrate + 2 H(+) = 2 Fe(III)-[cytochrome] + nitrite + H2O. With respect to regulation, activated by potassium and sodium ions and inhibited by magnesium and calcium ions. In terms of biological role, catalytic subunit of the periplasmic nitrate reductase complex NapAB. Receives electrons from NapB and catalyzes the reduction of nitrate to nitrite. The chain is Periplasmic nitrate reductase from Desulfovibrio desulfuricans (strain ATCC 27774 / DSM 6949 / MB).